The primary structure comprises 463 residues: Glutamate--tRNA ligase 2 (463 aa).

Residues Pro10–Ser20 carry the 'HIGH' region motif. The short motif at Lys239 to Arg243 is the 'KMSKS' region element. Lys242 contacts ATP.

This sequence belongs to the class-I aminoacyl-tRNA synthetase family. Glutamate--tRNA ligase type 1 subfamily. In terms of assembly, monomer.

Its subcellular location is the cytoplasm. The enzyme catalyses tRNA(Glu) + L-glutamate + ATP = L-glutamyl-tRNA(Glu) + AMP + diphosphate. Functionally, catalyzes the attachment of glutamate to tRNA(Glu) in a two-step reaction: glutamate is first activated by ATP to form Glu-AMP and then transferred to the acceptor end of tRNA(Glu). This Rickettsia felis (strain ATCC VR-1525 / URRWXCal2) (Rickettsia azadi) protein is Glutamate--tRNA ligase 2.